Here is a 460-residue protein sequence, read N- to C-terminus: Lipase member H-B (460 aa).

Positions methionine 1–glycine 26 are cleaved as a signal peptide. N-linked (GlcNAc...) asparagine glycosylation is found at asparagine 67 and asparagine 75. Serine 163 serves as the catalytic Nucleophile. Asparagine 177 carries N-linked (GlcNAc...) asparagine glycosylation. Aspartate 187 functions as the Charge relay system in the catalytic mechanism. Cysteine 242 and cysteine 255 are disulfide-bonded. Catalysis depends on histidine 257, which acts as the Charge relay system. Intrachain disulfides connect cysteine 279-cysteine 290 and cysteine 293-cysteine 301. Asparagine 289 carries N-linked (GlcNAc...) asparagine glycosylation. Asparagine 366 carries an N-linked (GlcNAc...) asparagine glycan. Cysteine 436 and cysteine 455 are joined by a disulfide.

It belongs to the AB hydrolase superfamily. Lipase family.

The protein localises to the secreted. It is found in the cell membrane. It carries out the reaction 1-hexadecanoyl-2-(9Z-octadecenoyl)-sn-glycero-3-phosphate + H2O = 2-(9Z-octadecenoyl)-sn-glycero-3-phosphate + hexadecanoate + H(+). In terms of biological role, hydrolyzes specifically phosphatidic acid (PA) to produce 2-acyl lysophosphatidic acid (LPA; a potent bioactive lipid mediator) and fatty acid. Does not hydrolyze other phospholipids, like phosphatidylserine (PS), phosphatidylcholine (PC) and phosphatidylethanolamine (PE) or triacylglycerol (TG). The polypeptide is Lipase member H-B (liph-b) (Xenopus laevis (African clawed frog)).